Reading from the N-terminus, the 271-residue chain is Multivesicular body subunit 12A (271 aa).

The MABP domain occupies 7–149; it reads SAPLAGLVWS…GFAIWCKKSK (143 aa). T128 bears the Phosphothreonine mark. The interval 149 to 192 is disordered; sequence KAPRPVPKPRTLSQDMRGLSLDPPKEPSKGSHPERTLSRLGSRA. Residues 153–158 carry the SH3-binding motif; sequence PVPKPR. A phosphoserine mark is found at S161 and S168. The span at 171-185 shows a compositional bias: basic and acidic residues; sequence PPKEPSKGSHPERTL. Residues 190-271 form an interaction with TSG101, VPS37B and VPS28 region; that stretch reads SRASTLRRTD…AAARLPPSVS (82 aa). Phosphoserine occurs at positions 193 and 200. Position 202 is a phosphotyrosine (Y202). Phosphoserine is present on S205. The UMA domain maps to 213-263; sequence MDGVPFTLHPRFEGKSCGPLNLSAFGDLTIKSLADIEKEYNYGFVVEKTAA.

This sequence belongs to the MVB12 family. In terms of assembly, component of the ESCRT-I complex (endosomal sorting complex required for transport I) which consists of TSG101, VPS28, a VPS37 protein (VPS37A to -D) and MVB12A or MVB12B in a 1:1:1:1 stoichiometry. Interacts with CD2AP and CIN85/SH3KBP1. Interacts with CD2AP (via one of the SH3 domains). Interacts with TSG101; the association appears to be mediated by the TSG101-VPS37 binary subcomplex. Interacts with VPS28. Interacts with VPS37B; the association appears to be mediated by the TSG101-VPS37 binary subcomplex. Interacts with VPS37C; the association appears to be mediated by the TSG101-VPS37 binary subcomplex. Interacts with VPS37D; the association appears to be mediated by the TSG101-VPS37 binary subcomplex. Interacts with CEP55. Phosphorylated on Tyr-202 upon EGF stimulation. Phosphorylation is required for interaction with CD2AP and CIN85/SH3KBP1.

The protein resides in the cytoplasm. Its subcellular location is the cytoskeleton. The protein localises to the nucleus. It is found in the endosome. It localises to the microtubule organizing center. The protein resides in the centrosome. Its subcellular location is the late endosome membrane. In terms of biological role, component of the ESCRT-I complex, a regulator of vesicular trafficking process. Required for the sorting of endocytic ubiquitinated cargos into multivesicular bodies. May be involved in the ligand-mediated internalization and down-regulation of EGF receptor. The chain is Multivesicular body subunit 12A (Mvb12a) from Mus musculus (Mouse).